We begin with the raw amino-acid sequence, 377 residues long: Nitric oxide reductase FlRd-NAD(+) reductase (377 aa).

It belongs to the FAD-dependent oxidoreductase family. FAD serves as cofactor.

Its subcellular location is the cytoplasm. It catalyses the reaction 2 reduced [nitric oxide reductase rubredoxin domain] + NAD(+) + H(+) = 2 oxidized [nitric oxide reductase rubredoxin domain] + NADH. Its pathway is nitrogen metabolism; nitric oxide reduction. Functionally, one of at least two accessory proteins for anaerobic nitric oxide (NO) reductase. Reduces the rubredoxin moiety of NO reductase. The polypeptide is Nitric oxide reductase FlRd-NAD(+) reductase (Salmonella arizonae (strain ATCC BAA-731 / CDC346-86 / RSK2980)).